Reading from the N-terminus, the 78-residue chain is MAKFKIKKGDMVQVIAGDDKGKKAKVLQVLPKQAQVIVEGCKVVKKAIKVSEKNPKGGFVSKEMPMSISNVKKAEGDN.

This sequence belongs to the universal ribosomal protein uL24 family. In terms of assembly, part of the 50S ribosomal subunit.

One of two assembly initiator proteins, it binds directly to the 5'-end of the 23S rRNA, where it nucleates assembly of the 50S subunit. Functionally, one of the proteins that surrounds the polypeptide exit tunnel on the outside of the subunit. This chain is Large ribosomal subunit protein uL24, found in Helicobacter hepaticus (strain ATCC 51449 / 3B1).